Reading from the N-terminus, the 461-residue chain is Nuclear distribution protein PAC1 (461 aa).

The stretch at 64–93 (NSIIRLHRKILDLEQKCQQLTEELEAVPTE) forms a coiled coil. WD repeat units follow at residues 118-157 (DVGA…MPLH), 161-203 (AHMK…AFQL), 209-252 (SHEH…KSFQ), 254-292 (HNQW…SMAV), 318-362 (DDQV…FIPH), 382-421 (GHTS…KVWP), and 423-461 (ASHG…VFMR).

Belongs to the WD repeat LIS1/nudF family. In terms of assembly, self-associates. Interacts with NDL1 and dynein.

Its subcellular location is the cytoplasm. The protein localises to the cytoskeleton. It localises to the spindle pole. Positively regulates the activity of the minus-end directed microtubule motor protein dynein. Plays a central role in positioning the mitotic spindle at the bud neck during cell division. Targets cytoplasmic dynein to microtubule plus ends, thereby promoting dynein-mediated microtubule sliding along the bud cortex and consequently the movement of the mitotic spindle to the bud neck. The polypeptide is Nuclear distribution protein PAC1 (Eremothecium gossypii (strain ATCC 10895 / CBS 109.51 / FGSC 9923 / NRRL Y-1056) (Yeast)).